A 323-amino-acid polypeptide reads, in one-letter code: Beta-ketoacyl-[acyl-carrier-protein] synthase III (323 aa).

Active-site residues include cysteine 112 and histidine 249. The segment at glutamine 250 to arginine 254 is ACP-binding. Asparagine 279 is an active-site residue.

It belongs to the thiolase-like superfamily. FabH family. In terms of assembly, homodimer.

Its subcellular location is the cytoplasm. The catalysed reaction is malonyl-[ACP] + acetyl-CoA + H(+) = 3-oxobutanoyl-[ACP] + CO2 + CoA. The protein operates within lipid metabolism; fatty acid biosynthesis. Functionally, catalyzes the condensation reaction of fatty acid synthesis by the addition to an acyl acceptor of two carbons from malonyl-ACP. Catalyzes the first condensation reaction which initiates fatty acid synthesis and may therefore play a role in governing the total rate of fatty acid production. Possesses both acetoacetyl-ACP synthase and acetyl transacylase activities. Its substrate specificity determines the biosynthesis of branched-chain and/or straight-chain of fatty acids. This is Beta-ketoacyl-[acyl-carrier-protein] synthase III from Clostridium kluyveri (strain NBRC 12016).